We begin with the raw amino-acid sequence, 470 residues long: Serine carboxypeptidase ctsa-4.1 (470 aa).

An N-terminal signal peptide occupies residues 1-19 (MKLLSILFIFVSSYSFCLA). Asn132 is a glycosylation site (N-linked (GlcNAc...) asparagine). Residue Ser169 is part of the active site. Residue Asn316 is glycosylated (N-linked (GlcNAc...) asparagine). Asp380 is a catalytic residue. A glycan (N-linked (GlcNAc...) asparagine) is linked at Asn396. The active site involves His441.

The protein belongs to the peptidase S10 family.

The catalysed reaction is Release of a C-terminal amino acid with broad specificity.. The protein is Serine carboxypeptidase ctsa-4.1 of Caenorhabditis elegans.